The chain runs to 440 residues: Proline--tRNA ligase (440 aa).

The protein belongs to the class-II aminoacyl-tRNA synthetase family. ProS type 2 subfamily. As to quaternary structure, homodimer.

It is found in the cytoplasm. It catalyses the reaction tRNA(Pro) + L-proline + ATP = L-prolyl-tRNA(Pro) + AMP + diphosphate. In terms of biological role, catalyzes the attachment of proline to tRNA(Pro) in a two-step reaction: proline is first activated by ATP to form Pro-AMP and then transferred to the acceptor end of tRNA(Pro). This chain is Proline--tRNA ligase, found in Azorhizobium caulinodans (strain ATCC 43989 / DSM 5975 / JCM 20966 / LMG 6465 / NBRC 14845 / NCIMB 13405 / ORS 571).